Consider the following 155-residue polypeptide: MAPKTKEEKPASEAVEPKAEAKPKAEKAPKKKEKKAPAKKSAKEPAAGDAAEGDKKKKKAKVAKSETYKLYIYKVLKQVHPDTGISSKAMSIMNSFINDIFEKVATEASKLSRYNKKPTVTSREIQTAVRLVLPGELAKHAVSEGTKAVTKFTSA.

A compositionally biased stretch (basic and acidic residues) spans 1–28; that stretch reads MAPKTKEEKPASEAVEPKAEAKPKAEKA. The segment at 1 to 62 is disordered; sequence MAPKTKEEKP…GDKKKKKAKV (62 aa). Basic residues predominate over residues 29-40; it reads PKKKEKKAPAKK. A Glycyl lysine isopeptide (Lys-Gly) (interchain with G-Cter in ubiquitin) cross-link involves residue K151.

It belongs to the histone H2B family. In terms of assembly, the nucleosome is a histone octamer containing two molecules each of H2A, H2B, H3 and H4 assembled in one H3-H4 heterotetramer and two H2A-H2B heterodimers. The octamer wraps approximately 147 bp of DNA. Monoubiquitinated to form H2BK143ub1; may give a specific tag for epigenetic transcriptional activation.

The protein localises to the nucleus. Its subcellular location is the chromosome. Core component of nucleosome. Nucleosomes wrap and compact DNA into chromatin, limiting DNA accessibility to the cellular machineries which require DNA as a template. Histones thereby play a central role in transcription regulation, DNA repair, DNA replication and chromosomal stability. DNA accessibility is regulated via a complex set of post-translational modifications of histones, also called histone code, and nucleosome remodeling. In Volvox carteri (Green alga), this protein is Histone H2B.4.